A 225-amino-acid polypeptide reads, in one-letter code: Lipoarabinomannan carrier protein LprG (225 aa).

The N-terminal stretch at 1-21 is a signal peptide; that stretch reads MRNRIRLALIPVAVAAIALAG. Residue C22 is the site of N-palmitoyl cysteine attachment. C22 carries the S-diacylglycerol cysteine lipid modification.

This sequence belongs to the LppX/LprAFG lipoprotein family. Modified by Lgt on Cys-22 with an S-linked diacylglyceral, signal peptide is removed by LspA, Cys-22 is further modifed with a fatty acid on its amino group by Lnt yielding a triacylated protein.

The protein localises to the cell inner membrane. Its function is as follows. Helps membrane protein MAB_2807 (P55) transport triacylglycerides (TAG) across the inner cell membrane into the periplasm and probably ultimately to the outer membrane. Binds TAG in its hydrophobic cavity and transfers it between lipid bilayers. TAG probably regulates lipid metabolism and growth regulation and plays a structural role in the outer membrane. Also binds mannosides, lipoarabinomannan and lipomannan and various glycolipids in the same cavity. This Mycobacteroides abscessus (strain ATCC 19977 / DSM 44196 / CCUG 20993 / CIP 104536 / JCM 13569 / NCTC 13031 / TMC 1543 / L948) (Mycobacterium abscessus) protein is Lipoarabinomannan carrier protein LprG.